The chain runs to 604 residues: Protein hemingway (604 aa).

4 disordered regions span residues 1–70, 103–309, 359–387, and 544–585; these read MSGA…GNPH, NQLS…PTSQ, SDRR…GGGI, and TIKA…IDLD. 4 stretches are compositionally biased toward acidic residues: residues 8-38, 135-183, 194-214, and 288-300; these read SDEE…YIEP, EDEA…DDAQ, DDSD…EDEP, and EEPE…EENQ. The span at 368–379 shows a compositional bias: low complexity; it reads EMSSMTETTMTS.

This sequence belongs to the CFAP97 family. In terms of tissue distribution, detected in ciliated sensory neurons at all stages of development, and in adult testis.

It localises to the cell projection. Its subcellular location is the cilium. It is found in the perikaryon. The protein resides in the cytoplasm. Involved in assembly and/or maintenance of motile cilia. Required during spermatogenesis for axoneme elongation. Necessary for optimal function of the chordotonal (hearing) organs. This chain is Protein hemingway, found in Drosophila melanogaster (Fruit fly).